We begin with the raw amino-acid sequence, 551 residues long: Glucose-6-phosphate isomerase (551 aa).

D-glucose 6-phosphate contacts are provided by residues 161 to 162 (GS), 212 to 217 (SKTFTT), Gln356, Glu360, His391, and Lys516. Residue Glu360 is the Proton donor of the active site. Active-site residues include His391 and Lys516.

The protein belongs to the GPI family. As to quaternary structure, homodimer.

Its subcellular location is the cytoplasm. The protein localises to the cytosol. The catalysed reaction is alpha-D-glucose 6-phosphate = beta-D-fructose 6-phosphate. Its pathway is carbohydrate degradation; glycolysis; D-glyceraldehyde 3-phosphate and glycerone phosphate from D-glucose: step 2/4. Functionally, in the cytoplasm, catalyzes the conversion of glucose-6-phosphate to fructose-6-phosphate, the second step in glycolysis, and the reverse reaction during gluconeogenesis. The polypeptide is Glucose-6-phosphate isomerase (gpi1) (Agaricus bisporus (White button mushroom)).